Here is a 434-residue protein sequence, read N- to C-terminus: Enolase (434 aa).

Residues His158 and Glu167 each contribute to the substrate site. Glu210 serves as the catalytic Proton donor. Mg(2+) contacts are provided by Asp245, Glu294, and Asp319. Residues Glu294 and Asp319 each contribute to the substrate site. Residue Lys344 is the Proton acceptor of the active site. Substrate contacts are provided by residues Ser371–Ser374 and Lys395.

Belongs to the enolase family. In terms of assembly, homodimer. It depends on Mg(2+) as a cofactor.

The protein resides in the cytoplasm. The enzyme catalyses (2R)-2-phosphoglycerate = phosphoenolpyruvate + H2O. It participates in carbohydrate degradation; glycolysis; pyruvate from D-glyceraldehyde 3-phosphate: step 4/5. The polypeptide is Enolase (Doryteuthis pealeii (Longfin inshore squid)).